Here is a 396-residue protein sequence, read N- to C-terminus: Dual specificity mitogen-activated protein kinase kinase dSOR1 (396 aa).

The disordered stretch occupies residues 25-44 (APTPPFKTPSGTDTHSLLGK). A Protein kinase domain is found at 87-364 (LEKLGELGSG…LKTLLSHPWI (278 aa)). Residues 93–101 (LGSGNGGVV) and Lys116 contribute to the ATP site. Asp209 serves as the catalytic Proton acceptor. 2 positions are modified to phosphoserine; by RAF: Ser237 and Ser241.

It belongs to the protein kinase superfamily. STE Ser/Thr protein kinase family. MAP kinase kinase subfamily. As to quaternary structure, interacts with Raf and ksr; Dsor1 binding to ksr probably promotes ksr and Raf dimerization and ksr-mediated Raf transactivation. In terms of processing, phosphorylation on Ser/Thr by MAP kinase kinase kinases regulates positively the kinase activity.

The catalysed reaction is L-seryl-[protein] + ATP = O-phospho-L-seryl-[protein] + ADP + H(+). It catalyses the reaction L-threonyl-[protein] + ATP = O-phospho-L-threonyl-[protein] + ADP + H(+). It carries out the reaction L-tyrosyl-[protein] + ATP = O-phospho-L-tyrosyl-[protein] + ADP + H(+). Its function is as follows. Required downstream of Raf in the sevenless (sev), torso (tor), and Drosophila EGF receptor homolog (DER) signal transduction pathways. Involved in both positive regulation (at the posterior terminus) and negative regulation (at the anterior domain) of tll, as in other terminal class gene products, maybe via the ERK-A kinase. This is Dual specificity mitogen-activated protein kinase kinase dSOR1 (Dsor1) from Drosophila melanogaster (Fruit fly).